The sequence spans 636 residues: MTTWSLRRRPARTLGLLLLVVLGFLVLRRLDWSTLVPLRLRHRQLGLQAKGWNFMLEDSTFWIFGGSIHYFRVPREYWRDRLLKMKACGLNTLTTYVPWNLHEPERGKFDFSGNLDLEAFVLMAAEIGLWVILRPGPYICSEMDLGGLPSWLLQDPGMRLRTTYKGFTEAVDLYFDHLMSRVVPLQYKRGGPIIAVQVENEYGSYNKDPAYMPYVKKALEDRGIVELLLTSDNKDGLSKGIVQGVLATINLQSTHELQLLTTFLFNVQGTQPKMVMEYWTGWFDSWGGPHNILDSSEVLKTVSAIVDAGSSINLYMFHGGTNFGFMNGAMHFHDYKSDVTSYDYDAVLTEAGDYTAKYMKLRDFFGSISGIPLPPPPDLLPKMPYEPLTPVLYLSLWDALKYLGEPIKSEKPINMENLPVNGGNGQSFGYILYETSITSSGILSGHVHDRGQVFVNTVSIGFLDYKTTKIAVPLIQGYTVLRILVENRGRVNYGENIDDQRKGLIGNLYLNDSPLKNFRIYSLDMKKSFFQRFGLDKWSSLPETPTLPAFFLGSLSISSTPCDTFLKLEGWEKGVVFINGQNLGRYWNIGPQKTLYLPGPWLSSGINQVIVFEETMAGPALQFTETPHLGRNQYIK.

A signal peptide spans methionine 1–tryptophan 32. Glutamate 201 acts as the Proton donor in catalysis. Glutamate 277 functions as the Nucleophile in the catalytic mechanism.

It belongs to the glycosyl hydrolase 35 family.

The protein resides in the secreted. This Homo sapiens (Human) protein is Beta-galactosidase-1-like protein 2 (GLB1L2).